Reading from the N-terminus, the 175-residue chain is ATP synthase subunit b (175 aa).

A helical membrane pass occupies residues 23–43; sequence TGITFLVLLFVLGKFAWGPIV.

This sequence belongs to the ATPase B chain family. As to quaternary structure, F-type ATPases have 2 components, F(1) - the catalytic core - and F(0) - the membrane proton channel. F(1) has five subunits: alpha(3), beta(3), gamma(1), delta(1), epsilon(1). F(0) has three main subunits: a(1), b(2) and c(10-14). The alpha and beta chains form an alternating ring which encloses part of the gamma chain. F(1) is attached to F(0) by a central stalk formed by the gamma and epsilon chains, while a peripheral stalk is formed by the delta and b chains.

The protein localises to the cell inner membrane. F(1)F(0) ATP synthase produces ATP from ADP in the presence of a proton or sodium gradient. F-type ATPases consist of two structural domains, F(1) containing the extramembraneous catalytic core and F(0) containing the membrane proton channel, linked together by a central stalk and a peripheral stalk. During catalysis, ATP synthesis in the catalytic domain of F(1) is coupled via a rotary mechanism of the central stalk subunits to proton translocation. Functionally, component of the F(0) channel, it forms part of the peripheral stalk, linking F(1) to F(0). This chain is ATP synthase subunit b, found in Anaeromyxobacter sp. (strain Fw109-5).